Reading from the N-terminus, the 749-residue chain is Transcription factor RFX3 (749 aa).

Positions 183 to 258 form a DNA-binding region, RFX-type winged-helix; that stretch reads HLQWLLDNYE…YHYYGIRVKP (76 aa). Residues 663 to 699 form a disordered region; that stretch reads VSPGNLDKDEGSEVESEMDEELDDSSEPQAKREKTEL. Over residues 674–688 the composition is skewed to acidic residues; that stretch reads SEVESEMDEELDDSS.

Belongs to the RFX family. In terms of assembly, heterodimer; heterodimerizes with RFX1 and RFX2, and RFX6.

Its subcellular location is the nucleus. In terms of biological role, transcription factor required for ciliogenesis and islet cell differentiation during endocrine pancreas development. Essential for the differentiation of nodal monocilia and left-right asymmetry specification during embryogenesis. Required for the biogenesis of motile cilia by governing growth and beating efficiency of motile cells. Also required for ciliated ependymal cell differentiation. Regulates the expression of genes involved in ciliary assembly (DYNC2LI1, FOXJ1 and BBS4) and genes involved in ciliary motility (DNAH11, DNAH9 and DNAH5). Together with RFX6, participates in the differentiation of 4 of the 5 islet cell types during endocrine pancreas development, with the exception of pancreatic PP (polypeptide-producing) cells. Regulates transcription by forming a heterodimer with another RFX protein and binding to the X-box in the promoter of target genes. Represses transcription of MAP1A in non-neuronal cells but not in neuronal cells. The chain is Transcription factor RFX3 (RFX3) from Homo sapiens (Human).